Reading from the N-terminus, the 188-residue chain is Elongation factor P (188 aa).

N6-(3,6-diaminohexanoyl)-5-hydroxylysine is present on K34.

This sequence belongs to the elongation factor P family. Post-translationally, may be beta-lysylated on the epsilon-amino group of Lys-34 by the combined action of EpmA and EpmB, and then hydroxylated on the C5 position of the same residue by EpmC (if this protein is present). Lysylation is critical for the stimulatory effect of EF-P on peptide-bond formation. The lysylation moiety may extend toward the peptidyltransferase center and stabilize the terminal 3-CCA end of the tRNA. Hydroxylation of the C5 position on Lys-34 may allow additional potential stabilizing hydrogen-bond interactions with the P-tRNA.

It localises to the cytoplasm. It functions in the pathway protein biosynthesis; polypeptide chain elongation. In terms of biological role, involved in peptide bond synthesis. Alleviates ribosome stalling that occurs when 3 or more consecutive Pro residues or the sequence PPG is present in a protein, possibly by augmenting the peptidyl transferase activity of the ribosome. Modification of Lys-34 is required for alleviation. This Citrobacter koseri (strain ATCC BAA-895 / CDC 4225-83 / SGSC4696) protein is Elongation factor P.